The chain runs to 387 residues: Phosphoglycerate kinase (387 aa).

Substrate is bound by residues 21-23 (DLN), Arg36, 59-62 (HLGR), Arg113, and Arg146. Residues Lys197, Glu314, and 340-343 (GGDT) each bind ATP.

It belongs to the phosphoglycerate kinase family. Monomer.

Its subcellular location is the cytoplasm. It catalyses the reaction (2R)-3-phosphoglycerate + ATP = (2R)-3-phospho-glyceroyl phosphate + ADP. It functions in the pathway carbohydrate degradation; glycolysis; pyruvate from D-glyceraldehyde 3-phosphate: step 2/5. The chain is Phosphoglycerate kinase from Pseudomonas putida (strain W619).